The chain runs to 288 residues: Ribosomal RNA small subunit methyltransferase A (288 aa).

6 residues coordinate S-adenosyl-L-methionine: Asn-18, Leu-20, Gly-45, Glu-66, Asp-91, and Asn-118.

Belongs to the class I-like SAM-binding methyltransferase superfamily. rRNA adenine N(6)-methyltransferase family. RsmA subfamily.

Its subcellular location is the cytoplasm. It catalyses the reaction adenosine(1518)/adenosine(1519) in 16S rRNA + 4 S-adenosyl-L-methionine = N(6)-dimethyladenosine(1518)/N(6)-dimethyladenosine(1519) in 16S rRNA + 4 S-adenosyl-L-homocysteine + 4 H(+). Functionally, specifically dimethylates two adjacent adenosines (A1518 and A1519) in the loop of a conserved hairpin near the 3'-end of 16S rRNA in the 30S particle. May play a critical role in biogenesis of 30S subunits. In Mannheimia succiniciproducens (strain KCTC 0769BP / MBEL55E), this protein is Ribosomal RNA small subunit methyltransferase A.